We begin with the raw amino-acid sequence, 666 residues long: Endogenous retrovirus group K member 19 Gag polyprotein (666 aa).

Residue glycine 2 is the site of N-myristoyl glycine attachment. Disordered regions lie at residues 170-189 and 223-264; these read LVGP…AGQV and PLES…GSEL. Over residues 232 to 247 the composition is skewed to pro residues; that stretch reads GMPPAPQGRAPYPQPP. CCHC-type zinc fingers lie at residues 544 to 561 and 580 to 597; these read GKCY…NCPV and DLCP…QCRS. Residues 598–640 form a disordered region; it reads KFDKNGQPLSGNEQRGQPQAPQQTGAFPIQPFVPHGFQGQQPP. Residues 604 to 622 show a composition bias toward polar residues; sequence QPLSGNEQRGQPQAPQQTG.

The protein belongs to the beta type-B retroviral Gag protein family. HERV class-II K(HML-2) gag subfamily. Myristoylation is essential for retroviral assembly. Alteration of the glycine residue leads to a block in the budding of particles and an accumulation of Gag inside the cell. Post-translationally, specific enzymatic cleavages may yield mature proteins.

The protein resides in the cell membrane. In terms of biological role, the products of the Gag polyproteins of infectious retroviruses perform highly complex orchestrated tasks during the assembly, budding, maturation, and infection stages of the viral replication cycle. During viral assembly, the proteins form membrane associations and self-associations that ultimately result in budding of an immature virion from the infected cell. Gag precursors also function during viral assembly to selectively bind and package two plus strands of genomic RNA. Endogenous Gag proteins may have kept, lost or modified their original function during evolution. The polypeptide is Endogenous retrovirus group K member 19 Gag polyprotein (ERVK-19) (Homo sapiens (Human)).